Reading from the N-terminus, the 363-residue chain is UDP-N-acetylglucosamine--N-acetylmuramyl-(pentapeptide) pyrophosphoryl-undecaprenol N-acetylglucosamine transferase (363 aa).

UDP-N-acetyl-alpha-D-glucosamine contacts are provided by residues 16 to 18 (TGG), N128, R167, S195, I249, 268 to 273 (ALTVSE), and Q294.

The protein belongs to the glycosyltransferase 28 family. MurG subfamily.

The protein resides in the cell inner membrane. The enzyme catalyses di-trans,octa-cis-undecaprenyl diphospho-N-acetyl-alpha-D-muramoyl-L-alanyl-D-glutamyl-meso-2,6-diaminopimeloyl-D-alanyl-D-alanine + UDP-N-acetyl-alpha-D-glucosamine = di-trans,octa-cis-undecaprenyl diphospho-[N-acetyl-alpha-D-glucosaminyl-(1-&gt;4)]-N-acetyl-alpha-D-muramoyl-L-alanyl-D-glutamyl-meso-2,6-diaminopimeloyl-D-alanyl-D-alanine + UDP + H(+). It participates in cell wall biogenesis; peptidoglycan biosynthesis. Functionally, cell wall formation. Catalyzes the transfer of a GlcNAc subunit on undecaprenyl-pyrophosphoryl-MurNAc-pentapeptide (lipid intermediate I) to form undecaprenyl-pyrophosphoryl-MurNAc-(pentapeptide)GlcNAc (lipid intermediate II). In Marinobacter nauticus (strain ATCC 700491 / DSM 11845 / VT8) (Marinobacter aquaeolei), this protein is UDP-N-acetylglucosamine--N-acetylmuramyl-(pentapeptide) pyrophosphoryl-undecaprenol N-acetylglucosamine transferase.